A 375-amino-acid polypeptide reads, in one-letter code: POU domain, class 3, transcription factor 1 (375 aa).

3 disordered regions span residues 1–29 (MAATAQYLPRNNSLPSNPLMHPDSDRMHQ), 56–139 (MSLT…QPLI), and 151–200 (MLGP…PSSD). 3 stretches are compositionally biased toward polar residues: residues 107–117 (VHQQTPSSHAW), 130–139 (PGSNSHQPLI), and 151–160 (MLGPQASSLH). Residues 162-171 (SMRDPLHDDP) are compositionally biased toward basic and acidic residues. The region spanning 194–268 (EDAPSSDDLE…LLNKWLEETD (75 aa)) is the POU-specific domain. Positions 286–345 (KRKKRTSIEVGVKGALENHFLKCPKPSAHEITSLADSLQLEKEVVRVWFCNRRQKEKRMT) form a DNA-binding region, homeobox.

The protein belongs to the POU transcription factor family. Class-3 subfamily.

The protein resides in the nucleus. Its function is as follows. Acts as a transcription factor. May play a role in neuronal differentiation. The sequence is that of POU domain, class 3, transcription factor 1 from Xenopus tropicalis (Western clawed frog).